We begin with the raw amino-acid sequence, 330 residues long: Tetraacyldisaccharide 4'-kinase (330 aa).

An ATP-binding site is contributed by 58-65 (TVGGSGKT).

This sequence belongs to the LpxK family.

The enzyme catalyses a lipid A disaccharide + ATP = a lipid IVA + ADP + H(+). Its pathway is glycolipid biosynthesis; lipid IV(A) biosynthesis; lipid IV(A) from (3R)-3-hydroxytetradecanoyl-[acyl-carrier-protein] and UDP-N-acetyl-alpha-D-glucosamine: step 6/6. In terms of biological role, transfers the gamma-phosphate of ATP to the 4'-position of a tetraacyldisaccharide 1-phosphate intermediate (termed DS-1-P) to form tetraacyldisaccharide 1,4'-bis-phosphate (lipid IVA). In Shewanella pealeana (strain ATCC 700345 / ANG-SQ1), this protein is Tetraacyldisaccharide 4'-kinase.